A 382-amino-acid polypeptide reads, in one-letter code: Galactokinase (382 aa).

34–37 lines the substrate pocket; that stretch reads EHTD. 124-130 is a binding site for ATP; it reads GAGLSSS. Mg(2+)-binding residues include S130 and E162. Residue D174 is the Proton acceptor of the active site. Substrate is bound at residue Y223.

This sequence belongs to the GHMP kinase family. GalK subfamily.

It localises to the cytoplasm. The catalysed reaction is alpha-D-galactose + ATP = alpha-D-galactose 1-phosphate + ADP + H(+). It functions in the pathway carbohydrate metabolism; galactose metabolism. Functionally, catalyzes the transfer of the gamma-phosphate of ATP to D-galactose to form alpha-D-galactose-1-phosphate (Gal-1-P). This Escherichia coli O17:K52:H18 (strain UMN026 / ExPEC) protein is Galactokinase.